The chain runs to 312 residues: Polyprenyl transferase atnF (312 aa).

N9 is a glycosylation site (N-linked (GlcNAc...) asparagine). 9 helical membrane-spanning segments follow: residues 30–50 (LHTIEGLSTASIGWLALFFYA), 64–84 (FIGIFATYQMTHCVFCLWNDI), 111–131 (AMWVFVLGVFASMGVTYWLLG), 132–152 (ADVTLTMVPIWVLSFIYPLCK), 154–174 (IIWAPQVVLGLTMALCVLPPW), 185–205 (GLLPASLFGAIFCWLVYLDLI), 229–249 (YLKAGLTVLGVLQVVCFVLAA), 255–275 (GFLLWVFGIAVWSASVPWSIM), and 288–308 (IFLVNAILGIYMAAVSGLNVS).

This sequence belongs to the UbiA prenyltransferase family. The cofactor is Mg(2+).

It localises to the membrane. It participates in secondary metabolite biosynthesis; terpenoid biosynthesis. Functionally, polyprenyl transferase; part of the gene cluster that mediates the biosynthesis of the meroterpenoids arthripenoids. The pathway begins with the HR-PKS atnH that catalyzes two chain-extension steps to form a reduced triketide, which then primes the SAT domain in the NR-PKS atnG to initiate three more cycles of extension to give a linear hexaketide corresponding to the polyketide part of arthripenoids. The FAD-dependent monooxygenase atnJ then performs an oxidative decarboxylation at C11 of the atnH/atnG product, via an electrophilic aromatic hydroxylation with concomitant ipso-decarboxylation. The membrane-bound polyprenyl transferase atnF then introduces a farnesyl group before the FAD-dependent monooxygenase atnK functions as the first epoxidase on terminal C12'-C13' olefin, followed by a second epoxidation on C7'-C8' catalyzed by atnA. The terpene cyclase/mutase atnI then initiates the sequential tricyclic ring formation through protonation of the terminal epoxide and catalyzes the regioselective and stereoselective 6/6/6-tricyclic ring formation. The cytochrome P450 monooxygenase atnM is responsible for hydroxylating both C1' and C10'. The next steps may involve ketoreduction and acetyl transfer by the ketoreductase atnB and the acetyltransferase atnC, and lead to the production of arthripenoid B, the final biosynthetic product of the atn cluster. The hydroquinone moiety in arthripenoid B is prone to undergo spontaneous oxidation to afford a benzoquinone compound, a key intermediate for generating structure diversity. For instance, addition of a cysteine followed by ring contraction gives arthripenoid A, tautomerization gives the main product arthripenoid C, addition of a molecular of water or amine affords arthripenoid D or E, respectively, and loss of one water forms arthripenoid F. The chain is Polyprenyl transferase atnF from Arthrinium sp.